Reading from the N-terminus, the 187-residue chain is BLOC-1-related complex subunit 8 homolog (187 aa).

The interval 165–187 is disordered; it reads QSQHETANDTRQGYNDDANNDQD.

This sequence belongs to the BORCS8 family.

The protein localises to the lysosome membrane. May participate in the coupling of lysosomes to microtubule plus-end-directed kinesin motor. The protein is BLOC-1-related complex subunit 8 homolog of Nematostella vectensis (Starlet sea anemone).